A 288-amino-acid polypeptide reads, in one-letter code: Bifunctional protein FolD (288 aa).

Residues 166-168 (GAS) and I232 each bind NADP(+).

The protein belongs to the tetrahydrofolate dehydrogenase/cyclohydrolase family. In terms of assembly, homodimer.

It catalyses the reaction (6R)-5,10-methylene-5,6,7,8-tetrahydrofolate + NADP(+) = (6R)-5,10-methenyltetrahydrofolate + NADPH. The enzyme catalyses (6R)-5,10-methenyltetrahydrofolate + H2O = (6R)-10-formyltetrahydrofolate + H(+). It functions in the pathway one-carbon metabolism; tetrahydrofolate interconversion. Catalyzes the oxidation of 5,10-methylenetetrahydrofolate to 5,10-methenyltetrahydrofolate and then the hydrolysis of 5,10-methenyltetrahydrofolate to 10-formyltetrahydrofolate. This Salmonella enteritidis PT4 (strain P125109) protein is Bifunctional protein FolD.